We begin with the raw amino-acid sequence, 277 residues long: Phosphate import ATP-binding protein PstB (277 aa).

The 242-residue stretch at 31 to 272 (IEVPGLSLFY…PAKKQTEDYI (242 aa)) folds into the ABC transporter domain. 63 to 70 (GPSGCGKS) contacts ATP.

Belongs to the ABC transporter superfamily. Phosphate importer (TC 3.A.1.7) family. In terms of assembly, the complex is composed of two ATP-binding proteins (PstB), two transmembrane proteins (PstC and PstA) and a solute-binding protein (PstS).

The protein localises to the cell inner membrane. It carries out the reaction phosphate(out) + ATP + H2O = ADP + 2 phosphate(in) + H(+). Its function is as follows. Part of the ABC transporter complex PstSACB involved in phosphate import. Responsible for energy coupling to the transport system. In Pseudomonas putida (Arthrobacter siderocapsulatus), this protein is Phosphate import ATP-binding protein PstB.